A 329-amino-acid polypeptide reads, in one-letter code: MPRRPLLEFEKPLVELEQQIEQIRQLARDSEVDVSQQLHQLESLAARRRQEIFQGLTPAQKIQVARHPHRPSTLDFIQMFCDDWIELHGDRRGNDDQALVGGVGRLGDQPVLLIGHQKGRDTKENVARNFGMATPGGYRKAMRLMEHADRFRLPILSFIDTPGAYAGLQAEEQGQGEAIAVNLREMFRLRVPVIATVIGEGGSGGALGIGVADRLLMFEHSVYTVASPEACASILWRDAAKAPDAATALRITGVDLLELGVVDEVLEEPSGGNNWAPLEAGQTLRAALERHLGELLALSERELKEGRYRKFRAMGRFVEGNSQNPGKID.

Residues 40-294 (QLESLAARRR…RAALERHLGE (255 aa)) form the CoA carboxyltransferase C-terminal domain.

This sequence belongs to the AccA family. As to quaternary structure, acetyl-CoA carboxylase is a heterohexamer composed of biotin carboxyl carrier protein (AccB), biotin carboxylase (AccC) and two subunits each of ACCase subunit alpha (AccA) and ACCase subunit beta (AccD).

Its subcellular location is the cytoplasm. It catalyses the reaction N(6)-carboxybiotinyl-L-lysyl-[protein] + acetyl-CoA = N(6)-biotinyl-L-lysyl-[protein] + malonyl-CoA. Its pathway is lipid metabolism; malonyl-CoA biosynthesis; malonyl-CoA from acetyl-CoA: step 1/1. Its function is as follows. Component of the acetyl coenzyme A carboxylase (ACC) complex. First, biotin carboxylase catalyzes the carboxylation of biotin on its carrier protein (BCCP) and then the CO(2) group is transferred by the carboxyltransferase to acetyl-CoA to form malonyl-CoA. The polypeptide is Acetyl-coenzyme A carboxylase carboxyl transferase subunit alpha (Parasynechococcus marenigrum (strain WH8102)).